The primary structure comprises 270 residues: Undecaprenyl-diphosphatase (270 aa).

7 helical membrane-spanning segments follow: residues 1 to 21, 92 to 112, 119 to 139, 150 to 170, 193 to 213, 223 to 243, and 250 to 270; these read MTWWEALLLGLIQGLTEFIPV, FRLGVFILVTLVPTGVAYVLF, AFGSPRFTSAMLVGTGVLLLL, LSGVKAFVVGVAQSCALVPGI, FSFLMLLPVVLGGTVLKGLEL, LSLGIGTVAAYGSGIGAIYVV, and GNLQYFAYYCFLIGGLGLWLL.

The protein belongs to the UppP family.

It localises to the cell inner membrane. It carries out the reaction di-trans,octa-cis-undecaprenyl diphosphate + H2O = di-trans,octa-cis-undecaprenyl phosphate + phosphate + H(+). Functionally, catalyzes the dephosphorylation of undecaprenyl diphosphate (UPP). Confers resistance to bacitracin. This is Undecaprenyl-diphosphatase from Salinibacter ruber (strain DSM 13855 / M31).